The chain runs to 126 residues: S-adenosylmethionine decarboxylase proenzyme (126 aa).

Ser63 (schiff-base intermediate with substrate; via pyruvic acid) is an active-site residue. Ser63 is subject to Pyruvic acid (Ser); by autocatalysis. His68 acts as the Proton acceptor; for processing activity in catalysis. The Proton donor; for catalytic activity role is filled by Cys83.

Belongs to the prokaryotic AdoMetDC family. Type 1 subfamily. In terms of assembly, heterotetramer of two alpha and two beta chains arranged as a dimer of alpha/beta heterodimers. Pyruvate serves as cofactor. Is synthesized initially as an inactive proenzyme. Formation of the active enzyme involves a self-maturation process in which the active site pyruvoyl group is generated from an internal serine residue via an autocatalytic post-translational modification. Two non-identical subunits are generated from the proenzyme in this reaction, and the pyruvate is formed at the N-terminus of the alpha chain, which is derived from the carboxyl end of the proenzyme. The post-translation cleavage follows an unusual pathway, termed non-hydrolytic serinolysis, in which the side chain hydroxyl group of the serine supplies its oxygen atom to form the C-terminus of the beta chain, while the remainder of the serine residue undergoes an oxidative deamination to produce ammonia and the pyruvoyl group blocking the N-terminus of the alpha chain.

The catalysed reaction is S-adenosyl-L-methionine + H(+) = S-adenosyl 3-(methylsulfanyl)propylamine + CO2. The protein operates within amine and polyamine biosynthesis; S-adenosylmethioninamine biosynthesis; S-adenosylmethioninamine from S-adenosyl-L-methionine: step 1/1. Catalyzes the decarboxylation of S-adenosylmethionine to S-adenosylmethioninamine (dcAdoMet), the propylamine donor required for the synthesis of the polyamines spermine and spermidine from the diamine putrescine. The chain is S-adenosylmethionine decarboxylase proenzyme from Syntrophomonas wolfei subsp. wolfei (strain DSM 2245B / Goettingen).